Reading from the N-terminus, the 65-residue chain is Large ribosomal subunit protein uL29 (65 aa).

Belongs to the universal ribosomal protein uL29 family.

The sequence is that of Large ribosomal subunit protein uL29 from Acidovorax ebreus (strain TPSY) (Diaphorobacter sp. (strain TPSY)).